A 410-amino-acid chain; its full sequence is Retrovirus-related Pol polyprotein from type-1 retrotransposable element R1 2 (410 aa).

In terms of domain architecture, Reverse transcriptase spans G1 to V118. Residues S254–G410 are nucleic acid-binding endonuclease.

The catalysed reaction is DNA(n) + a 2'-deoxyribonucleoside 5'-triphosphate = DNA(n+1) + diphosphate. The polypeptide is Retrovirus-related Pol polyprotein from type-1 retrotransposable element R1 2 (Nasonia vitripennis (Parasitic wasp)).